Consider the following 196-residue polypeptide: Superantigen-like protein 11 (196 aa).

The tract at residues Leu-65–Tyr-167 is sialyl Lewis X-binding.

This sequence belongs to the staphylococcal/streptococcal toxin family. As to quaternary structure, homodimer (via its C-terminal domain). Interacts with host FCAR and SELPLG (via sialyl Lewis X).

Its subcellular location is the secreted. Secreted protein that plays a role in the inhibition of host immune system. Targets myeloid cells such as monocytes or granulocytes through binding with sialyllactosamine-containing glycoproteins. Prevents initial rolling of neutrophils toward the site of infection by interacting with host SELPLG. Disrupts neutrophil motility by induction of cell adhesion via interacting with glycans but independently of SELPLG. This is Superantigen-like protein 11 from Staphylococcus aureus.